The primary structure comprises 635 residues: Probable monoacyl phosphatidylinositol tetramannoside-binding protein LpqW (635 aa).

The signal sequence occupies residues 1–26; the sequence is MGVPSPVRRVCVTVGALVALACMVLA. 3 disordered regions span residues 32–52, 389–412, and 511–551; these read PPPAPQSTDTPRSTPPPPRRP, NTSVSPAPSVPDSTTTSVSTGPPE, and NAPT…LVKA. Low complexity-rich tracts occupy residues 390–411 and 511–531; these read TSVSPAPSVPDSTTTSVSTGPP and NAPTTAPSAPIGPTPSAAPDT.

This sequence belongs to the bacterial solute-binding protein 5 family.

It participates in phospholipid metabolism; phosphatidylinositol metabolism. Its function is as follows. May directly or indirectly regulate the accessibility of the key branch point intermediate, monoacyl phosphatidylinositol tetramannoside (AcPIM4), to the elongating alpha-1,6 mannosyltransferases which could regulate the lipoarabinomannans (LAMs) biosynthesis. This chain is Probable monoacyl phosphatidylinositol tetramannoside-binding protein LpqW (lpqW), found in Mycobacterium tuberculosis (strain CDC 1551 / Oshkosh).